The primary structure comprises 237 residues: Uridylate kinase (237 aa).

Residue 11 to 14 (KLSG) participates in ATP binding. Gly-53 contacts UMP. Positions 54 and 58 each coordinate ATP. UMP contacts are provided by residues Asp-73 and 134–141 (TGNPFFTT). Thr-161, Tyr-167, and Asp-170 together coordinate ATP.

Belongs to the UMP kinase family. As to quaternary structure, homohexamer.

Its subcellular location is the cytoplasm. The catalysed reaction is UMP + ATP = UDP + ADP. It functions in the pathway pyrimidine metabolism; CTP biosynthesis via de novo pathway; UDP from UMP (UMPK route): step 1/1. Inhibited by UTP. Its function is as follows. Catalyzes the reversible phosphorylation of UMP to UDP. This Burkholderia ambifaria (strain ATCC BAA-244 / DSM 16087 / CCUG 44356 / LMG 19182 / AMMD) (Burkholderia cepacia (strain AMMD)) protein is Uridylate kinase.